The sequence spans 325 residues: Interferon regulatory factor 1 (325 aa).

The segment at residues 5-113 is a DNA-binding region (IRF tryptophan pentad repeat); that stretch reads RMRMRPWLEM…SAVRVYRMLP (109 aa). Residue lysine 78 is modified to N6-acetyllysine. The segment at 92–165 is disordered; it reads EEVKDQSRNK…TLPDDHSSYT (74 aa). Over residues 141-157 the composition is skewed to polar residues; that stretch reads GDSSPDTFSDGLSSSTL. Residues lysine 275 and lysine 299 each participate in a glycyl lysine isopeptide (Lys-Gly) (interchain with G-Cter in SUMO) cross-link.

The protein belongs to the IRF family. Monomer. Homodimer. Interacts with EP300. Interacts with MYD88. Interacts with PIAS3. Interacts with SPOP. Phosphorylated by CK2 and this positively regulates its activity. Post-translationally, sumoylation represses the transcriptional activity and displays enhanced resistance to protein degradation. Sumoylated by UBE2I/UBC9 and SUMO1. Inactivates the tumor suppressor activity. Elevated levels in tumor cells. Major site is Lys-275. Sumoylation is enhanced by PIAS3. Desumoylated by SENP1 in tumor cells and appears to compete with ubiquitination on C-terminal sites. In terms of processing, ubiquitinated in a SPOP-depedent manner. Appears to compete with sumoylation on C-terminal sites.

It is found in the nucleus. The protein resides in the cytoplasm. Its activity is regulated as follows. Activated by MYD88. In terms of biological role, transcriptional regulator which displays a remarkable functional diversity in the regulation of cellular responses. Regulates transcription of IFN and IFN-inducible genes, host response to viral and bacterial infections, regulation of many genes expressed during hematopoiesis, inflammation, immune responses and cell proliferation and differentiation, regulation of the cell cycle and induction of growth arrest and programmed cell death following DNA damage. Stimulates both innate and acquired immune responses through the activation of specific target genes and can act as a transcriptional activator and repressor regulating target genes by binding to an interferon-stimulated response element (ISRE) in their promoters. Has an essentail role in IFNG-dependent immunity to mycobacteria. Competes with the transcriptional repressor ZBED2 for binding to a common consensus sequence in gene promoters. Its target genes for transcriptional activation activity include: genes involved in anti-viral response, such as IFN-alpha/beta, RIGI, TNFSF10/TRAIL, ZBP1, OAS1/2, PIAS1/GBP, EIF2AK2/PKR and RSAD2/viperin; antibacterial response, such as GBP2, GBP5 and NOS2/INOS; anti-proliferative response, such as p53/TP53, LOX and CDKN1A; apoptosis, such as BBC3/PUMA, CASP1, CASP7 and CASP8; immune response, such as IL7, IL12A/B and IL15, PTGS2/COX2 and CYBB; DNA damage responses and DNA repair, such as POLQ/POLH; MHC class I expression, such as TAP1, PSMB9/LMP2, PSME1/PA28A, PSME2/PA28B and B2M and MHC class II expression, such as CIITA; metabolic enzymes, such as ACOD1/IRG1. Represses genes involved in anti-proliferative response, such as BIRC5/survivin, CCNB1, CCNE1, CDK1, CDK2 and CDK4 and in immune response, such as FOXP3, IL4, ANXA2 and TLR4. Stimulates p53/TP53-dependent transcription through enhanced recruitment of EP300 leading to increased acetylation of p53/TP53. Plays an important role in immune response directly affecting NK maturation and activity, macrophage production of IL12, Th1 development and maturation of CD8+ T-cells. Also implicated in the differentiation and maturation of dendritic cells and in the suppression of regulatory T (Treg) cells development. Acts as a tumor suppressor and plays a role not only in antagonism of tumor cell growth but also in stimulating an immune response against tumor cells. The polypeptide is Interferon regulatory factor 1 (IRF1) (Homo sapiens (Human)).